The primary structure comprises 355 residues: S-adenosylmethionine:tRNA ribosyltransferase-isomerase (355 aa).

Belongs to the QueA family. As to quaternary structure, monomer.

The protein localises to the cytoplasm. The enzyme catalyses 7-aminomethyl-7-carbaguanosine(34) in tRNA + S-adenosyl-L-methionine = epoxyqueuosine(34) in tRNA + adenine + L-methionine + 2 H(+). The protein operates within tRNA modification; tRNA-queuosine biosynthesis. Transfers and isomerizes the ribose moiety from AdoMet to the 7-aminomethyl group of 7-deazaguanine (preQ1-tRNA) to give epoxyqueuosine (oQ-tRNA). The sequence is that of S-adenosylmethionine:tRNA ribosyltransferase-isomerase from Burkholderia cenocepacia (strain ATCC BAA-245 / DSM 16553 / LMG 16656 / NCTC 13227 / J2315 / CF5610) (Burkholderia cepacia (strain J2315)).